The chain runs to 739 residues: Exocyst complex component 3-like protein (739 aa).

2 disordered regions span residues 1-21 (MDSKIQPTLRPGSSCPRPEWP) and 698-718 (AALSSLQAGPPPSPSTGRRAL). Positions 1 to 370 (MDSKIQPTLR…DVSQLEPLLT (370 aa)) are mediates interaction with EXOC2, EXOC4 and EXOC5.

The protein belongs to the SEC6 family. Interacts with EXOC2, EXOC4 and EXOC5; may be part of the exocyst. As to expression, ubiquitously expressed.

Its subcellular location is the cytoplasmic vesicle. It localises to the secretory vesicle. Its function is as follows. As part of the exocyst, may play a role in regulated exocytosis of insulin granules. This is Exocyst complex component 3-like protein (Exoc3l1) from Mus musculus (Mouse).